We begin with the raw amino-acid sequence, 308 residues long: tRNA dimethylallyltransferase (308 aa).

10–17 is a binding site for ATP; sequence GPTASGKT. 12–17 lines the substrate pocket; the sequence is TASGKT. Interaction with substrate tRNA regions lie at residues 35 to 38 and 159 to 163; these read DSSL and QRIFR.

Belongs to the IPP transferase family. As to quaternary structure, monomer. It depends on Mg(2+) as a cofactor.

The enzyme catalyses adenosine(37) in tRNA + dimethylallyl diphosphate = N(6)-dimethylallyladenosine(37) in tRNA + diphosphate. Its function is as follows. Catalyzes the transfer of a dimethylallyl group onto the adenine at position 37 in tRNAs that read codons beginning with uridine, leading to the formation of N6-(dimethylallyl)adenosine (i(6)A). This is tRNA dimethylallyltransferase from Francisella tularensis subsp. novicida (strain U112).